The sequence spans 201 residues: Ribonuclease HII (201 aa).

Residues 15 to 201 (QRVAGVDEVG…FRPVRRFLEA (187 aa)) form the RNase H type-2 domain. D21, E22, and D113 together coordinate a divalent metal cation.

The protein belongs to the RNase HII family. Requires Mn(2+) as cofactor. Mg(2+) is required as a cofactor.

It localises to the cytoplasm. The enzyme catalyses Endonucleolytic cleavage to 5'-phosphomonoester.. Its function is as follows. Endonuclease that specifically degrades the RNA of RNA-DNA hybrids. The sequence is that of Ribonuclease HII from Nitrosococcus oceani (strain ATCC 19707 / BCRC 17464 / JCM 30415 / NCIMB 11848 / C-107).